Here is an 872-residue protein sequence, read N- to C-terminus: Alanine--tRNA ligase (872 aa).

The Zn(2+) site is built by H567, H571, C669, and H673.

This sequence belongs to the class-II aminoacyl-tRNA synthetase family. Zn(2+) serves as cofactor.

It is found in the cytoplasm. It catalyses the reaction tRNA(Ala) + L-alanine + ATP = L-alanyl-tRNA(Ala) + AMP + diphosphate. In terms of biological role, catalyzes the attachment of alanine to tRNA(Ala) in a two-step reaction: alanine is first activated by ATP to form Ala-AMP and then transferred to the acceptor end of tRNA(Ala). Also edits incorrectly charged Ser-tRNA(Ala) and Gly-tRNA(Ala) via its editing domain. The chain is Alanine--tRNA ligase from Streptococcus pyogenes serotype M28 (strain MGAS6180).